The following is a 35-amino-acid chain: uncharacterized protein (35 aa).

This is an uncharacterized protein from Bacillus subtilis (strain 168).